The sequence spans 624 residues: Chaperone protein HtpG (624 aa).

Residues 1 to 336 (MKGQETRGFQ…SNDLPLNVSR (336 aa)) form an a; substrate-binding region. A b region spans residues 337–552 (EILQDSTVTR…ADEMSTQMAK (216 aa)). Positions 553-624 (LFAAAGQSVP…IRRMNQLLVS (72 aa)) are c.

Belongs to the heat shock protein 90 family. In terms of assembly, homodimer.

It is found in the cytoplasm. In terms of biological role, molecular chaperone. Has ATPase activity. This chain is Chaperone protein HtpG, found in Salmonella paratyphi B (strain ATCC BAA-1250 / SPB7).